The primary structure comprises 419 residues: D-amino acid dehydrogenase (419 aa).

3–17 lines the FAD pocket; that stretch reads VLILGGGVVGVTSAY.

The protein belongs to the DadA oxidoreductase family. FAD serves as cofactor.

It catalyses the reaction a D-alpha-amino acid + A + H2O = a 2-oxocarboxylate + AH2 + NH4(+). It participates in amino-acid degradation; D-alanine degradation; NH(3) and pyruvate from D-alanine: step 1/1. Its function is as follows. Oxidative deamination of D-amino acids. This chain is D-amino acid dehydrogenase, found in Methylobacterium radiotolerans (strain ATCC 27329 / DSM 1819 / JCM 2831 / NBRC 15690 / NCIMB 10815 / 0-1).